Reading from the N-terminus, the 60-residue chain is Large ribosomal subunit protein bL32 (60 aa).

Residues 1–44 form a disordered region; it reads MAVQQNKKSRSARDMRRSHDALSENALSVEKTTGEVHLRHHVSP. The segment covering 11-22 has biased composition (basic and acidic residues); the sequence is SARDMRRSHDAL.

The protein belongs to the bacterial ribosomal protein bL32 family.

The sequence is that of Large ribosomal subunit protein bL32 from Pseudomonas putida (strain W619).